The following is a 101-amino-acid chain: Anti-sigma factor RshA (101 aa).

The disordered stretch occupies residues 1–20; it reads MSETEREDERWTPPIGPIDP. Residues Cys-25, His-51, Cys-55, and Cys-58 each coordinate iron-sulfur cluster. Position 96 is a phosphothreonine (Thr-96).

The protein belongs to the zinc-associated anti-sigma factor (ZAS) superfamily. Interacts with cognate ECF RNA polymerase sigma factor SigH under reducing conditions; the complex is disrupted under oxiding conditions or as temperatures rise. Binding inhibits the interaction of SigH with the RNA polymerase catalytic core. It depends on iron-sulfur cluster as a cofactor. In terms of processing, phosphorylated, probably by PknB. Phosphorylation decreases interaction with SigH, probably leading to increased SigH-mediated transcription.

In terms of biological role, a redox-regulated anti-sigma factor for cognate extracytoplasmic function (ECF) sigma factor SigH. ECF sigma factors are held in an inactive form by an anti-sigma factor. Overexpression leads to increased susceptibility to diamide. The polypeptide is Anti-sigma factor RshA (rshA) (Mycolicibacterium smegmatis (strain ATCC 700084 / mc(2)155) (Mycobacterium smegmatis)).